We begin with the raw amino-acid sequence, 126 residues long: Histone H2B 7 (126 aa).

A compositionally biased stretch (low complexity) spans 1–12 (MPEPAKSAPAPK). Positions 1-35 (MPEPAKSAPAPKKGSKKAVTKTQKKGDKKRKRARK) are disordered. An N6-acetyllysine mark is found at lysine 6 and lysine 13. Residues 13–34 (KGSKKAVTKTQKKGDKKRKRAR) show a composition bias toward basic residues. A Phosphoserine modification is found at serine 15. Lysine 16 and lysine 21 each carry N6-acetyllysine. Residue serine 113 is glycosylated (O-linked (GlcNAc) serine). A Glycyl lysine isopeptide (Lys-Gly) (interchain with G-Cter in ubiquitin) cross-link involves residue lysine 121.

This sequence belongs to the histone H2B family. As to quaternary structure, the nucleosome is a histone octamer containing two molecules each of H2A, H2B, H3 and H4 assembled in one H3-H4 heterotetramer and two H2A-H2B heterodimers. The octamer wraps approximately 147 bp of DNA. In terms of processing, monoubiquitination of Lys-121 by the BRE1 gives a specific tag for epigenetic transcriptional activation and is also prerequisite for histone H3 'Lys-4' and 'Lys-79' methylation. Phosphorylated on Ser-15 during apoptosis; which facilitates apoptotic chromatin condensation. Post-translationally, glcNAcylation at Ser-113 promotes monoubiquitination of Lys-121. It fluctuates in response to extracellular glucose, and associates with transcribed genes.

It localises to the nucleus. Its subcellular location is the chromosome. Core component of nucleosome. Nucleosomes wrap and compact DNA into chromatin, limiting DNA accessibility to the cellular machineries which require DNA as a template. Histones thereby play a central role in transcription regulation, DNA repair, DNA replication and chromosomal stability. DNA accessibility is regulated via a complex set of post-translational modifications of histones, also called histone code, and nucleosome remodeling. The chain is Histone H2B 7 (H2B-VII) from Gallus gallus (Chicken).